The sequence spans 485 residues: ATP synthase subunit beta (485 aa).

An ATP-binding site is contributed by 170–177; the sequence is GGAGVGKT.

This sequence belongs to the ATPase alpha/beta chains family. F-type ATPases have 2 components, CF(1) - the catalytic core - and CF(0) - the membrane proton channel. CF(1) has five subunits: alpha(3), beta(3), gamma(1), delta(1), epsilon(1). CF(0) has three main subunits: a(1), b(2) and c(9-12). The alpha and beta chains form an alternating ring which encloses part of the gamma chain. CF(1) is attached to CF(0) by a central stalk formed by the gamma and epsilon chains, while a peripheral stalk is formed by the delta and b chains.

Its subcellular location is the cell membrane. The enzyme catalyses ATP + H2O + 4 H(+)(in) = ADP + phosphate + 5 H(+)(out). Its function is as follows. Produces ATP from ADP in the presence of a proton gradient across the membrane. The catalytic sites are hosted primarily by the beta subunits. The sequence is that of ATP synthase subunit beta from Salinispora arenicola (strain CNS-205).